A 350-amino-acid chain; its full sequence is Bifunctional nitrilase/nitrile hydratase NIT4B (350 aa).

A CN hydrolase domain is found at 30-302; sequence VRATVVQAST…EALISADLDL (273 aa). The Proton acceptor role is filled by glutamate 70. The active site involves lysine 157. Catalysis depends on cysteine 191, which acts as the Nucleophile.

This sequence belongs to the carbon-nitrogen hydrolase superfamily. Nitrilase family. As to expression, highly expressed in leaves and cotyledons, lower expression in stems and roots.

It carries out the reaction L-asparagine = 3-cyano-L-alanine + H2O. The enzyme catalyses 3-cyano-L-alanine + 2 H2O = L-aspartate + NH4(+). Involved in the cyanide detoxification pathway. Has nitrilase and nitrile-hydratase activity in the ratio 3.3:1, producing both asparagine and aspartic acid from beta-cyano-L-alanine (Ala(CN)). Can also use 3-phenylpropionitrile as substrate, but not indole-3-acetonitrile. The chain is Bifunctional nitrilase/nitrile hydratase NIT4B (NIT4B) from Lupinus angustifolius (Narrow-leaved blue lupine).